A 911-amino-acid polypeptide reads, in one-letter code: Zinc finger protein 721 (911 aa).

A C2H2-type 1; degenerate zinc finger spans residues 69–91 (FQCNARVKVFSKFANSNKDKTRH). A C2H2-type 2 zinc finger spans residues 97–119 (FKCNECGKSFQKFSDLTQHKGIH). A C2H2-type 3; degenerate zinc finger spans residues 125 to 147 (YTCEERGKDFGWYTDLNQHKKIH). The C2H2-type 4 zinc-finger motif lies at 153–175 (YKCEECGKAFNRSTNLTAHKRIH). The C2H2-type 5; degenerate zinc-finger motif lies at 181–203 (YTGEDRDRAFGWSTNLNEYKKIH). C2H2-type zinc fingers lie at residues 209-231 (YKCKECGKAFMHSSHLNKHEKIH), 237-259 (YKCKECGKVISSSSSFAKHKRIH), 265-287 (FKCLECGKAFNISTTLTKHRRIH), 293-315 (YTCEVCGKAFRQSANLYVHRRIH), 321-343 (YTCGECGKTFRQSANLYVHRRIH), 349-371 (YKCEDCGKAFGRYTALNQHKKIH), and 377-399 (YKCEECGKAFNSSTNLTAHKRIH). The C2H2-type 13; degenerate zinc-finger motif lies at 405-427 (YTCEDRGRAFGLSTNLNEYKKIH). C2H2-type zinc fingers lie at residues 433-455 (YKCKECGKAFIHSLHLNKHEKIH), 461-483 (YKCKQCGKVITSSSSFAKHKRIH), 489-511 (FECLECGKAFTSSTTLTKHRRIH), 517-539 (YTCEVCGKAFRQSAILYVHRRIH), 545-567 (YTCEECGKTFRQSANLYVHRRIH), and 573-595 (YKCEECGKAFGRYTDLNQHKKIH). A Glycyl lysine isopeptide (Lys-Gly) (interchain with G-Cter in SUMO2) cross-link involves residue Lys478. Residues 601 to 623 (YKCEECGKDFVWYTDLNQQKKIY) form a C2H2-type 20; degenerate zinc finger. The segment at 629–651 (YKCEECGKAFAPSTDLNQHTKIL) adopts a C2H2-type 21; degenerate zinc-finger fold. Lys649 is covalently cross-linked (Glycyl lysine isopeptide (Lys-Gly) (interchain with G-Cter in SUMO2)). 2 C2H2-type zinc fingers span residues 657-679 (YKCEECGKAFGWSIALNQHKKIH) and 685-707 (YKCEECGKAFSRSRNLTTHRRVH). The segment at 713 to 735 (YKCEDRGRSFGWSTNLNEYKKIH) adopts a C2H2-type 24; degenerate zinc-finger fold. C2H2-type zinc fingers lie at residues 741 to 763 (YKCKECGKVFKQSSHLNRHEKIH), 769 to 791 (YKCKECGKVITSSSSFAKHKRIH), 797 to 819 (FKCLECGKAFTSSTTLTKHRRIH), 825 to 847 (YTCEECGKAFRQSAILYVHRRIH), 853 to 875 (YTCGECGKTFRQSANLYAHKKIH), and 881 to 903 (YTCGDCGKTFRQSANLYAHKKIH). A Glycyl lysine isopeptide (Lys-Gly) (interchain with G-Cter in SUMO2) cross-link involves residue Lys786.

Belongs to the krueppel C2H2-type zinc-finger protein family.

Its subcellular location is the nucleus. In terms of biological role, may be involved in transcriptional regulation. The chain is Zinc finger protein 721 (ZNF721) from Homo sapiens (Human).